Consider the following 413-residue polypeptide: Autophagy-related protein 18 (413 aa).

5 WD repeats span residues 1–36 (MAMNFVTFNQDYSYLAVATAKGFRIFTTDPFAKSYE), 69–114 (KRQS…LLYT), 141–182 (PHKA…AINV), 185–225 (AHRS…KLYQ), and 230–269 (SIPSRIYSMSFNTTSTLLCVSSSTETIHLFKLSQGQSSES). Positions 226–230 (FRRGS) match the L/FRRG motif motif. Residues 263 to 289 (QGQSSESSLPSPSAPQRSMSQSSLSNS) show a composition bias toward low complexity. The segment at 263-315 (QGQSSESSLPSPSAPQRSMSQSSLSNSPDEDETSGDKDSSEFHSRKHNGTLMG) is disordered. A compositionally biased stretch (basic and acidic residues) spans 296–305 (SGDKDSSEFH). 2 WD repeats span residues 308–354 (KHNG…AWIK) and 366–406 (GNTG…GGEG).

This sequence belongs to the WD repeat PROPPIN family. In terms of assembly, component of the PI(3,5)P2 regulatory complex.

The protein resides in the preautophagosomal structure membrane. The protein localises to the vacuole membrane. It is found in the endosome membrane. The PI(3,5)P2 regulatory complex regulates both the synthesis and turnover of phosphatidylinositol 3,5-bisphosphate (PtdIns(3,5)P2). Necessary for proper vacuole morphology. Plays an important role in osmotically-induced vacuole fragmentation. Required for cytoplasm to vacuole transport (Cvt) vesicle formation, pexophagy and starvation-induced autophagy. Involved in correct atg9 trafficking to the pre-autophagosomal structure. Might also be involved in premeiotic DNA replication. The chain is Autophagy-related protein 18 (atg18) from Aspergillus oryzae (strain ATCC 42149 / RIB 40) (Yellow koji mold).